We begin with the raw amino-acid sequence, 257 residues long: Acyl-[acyl-carrier-protein]--UDP-N-acetylglucosamine O-acyltransferase (257 aa).

This sequence belongs to the transferase hexapeptide repeat family. LpxA subfamily. Homotrimer.

It localises to the cytoplasm. The enzyme catalyses a (3R)-hydroxyacyl-[ACP] + UDP-N-acetyl-alpha-D-glucosamine = a UDP-3-O-[(3R)-3-hydroxyacyl]-N-acetyl-alpha-D-glucosamine + holo-[ACP]. Its pathway is glycolipid biosynthesis; lipid IV(A) biosynthesis; lipid IV(A) from (3R)-3-hydroxytetradecanoyl-[acyl-carrier-protein] and UDP-N-acetyl-alpha-D-glucosamine: step 1/6. Its function is as follows. Involved in the biosynthesis of lipid A, a phosphorylated glycolipid that anchors the lipopolysaccharide to the outer membrane of the cell. The sequence is that of Acyl-[acyl-carrier-protein]--UDP-N-acetylglucosamine O-acyltransferase from Fusobacterium nucleatum subsp. nucleatum (strain ATCC 25586 / DSM 15643 / BCRC 10681 / CIP 101130 / JCM 8532 / KCTC 2640 / LMG 13131 / VPI 4355).